The following is a 622-amino-acid chain: Ferredoxin-fold anticodon-binding domain-containing protein 1 homolog (622 aa).

The region spanning 529–622 is the FDX-ACB domain; that stretch reads LYPPCYVHDV…IQRQLHVSPR (94 aa).

This is Ferredoxin-fold anticodon-binding domain-containing protein 1 homolog (Fdxacb1) from Mus musculus (Mouse).